The following is a 206-amino-acid chain: Sclerostin domain-containing protein 1 (206 aa).

The signal sequence occupies residues 1-23 (MLPPAIHFYLLPLACILMKSCLA). Asparagine 47 carries N-linked (GlcNAc...) asparagine glycosylation. 4 cysteine pairs are disulfide-bonded: cysteine 75-cysteine 133, cysteine 89-cysteine 147, cysteine 100-cysteine 163, and cysteine 104-cysteine 165. Residues 75–170 (CRELRSTKYI…TACKCKRYTR (96 aa)) enclose the CTCK domain. N-linked (GlcNAc...) asparagine glycosylation occurs at asparagine 173. The tract at residues 176 to 206 (SHNFESMSPAKPVQHHRERKRASKSSKHSMS) is disordered. The span at 188-206 (VQHHRERKRASKSSKHSMS) shows a compositional bias: basic residues.

This sequence belongs to the sclerostin family. As to quaternary structure, interacts with BMP2, BMP4, BMP6 and BMP7 with high affinity.

It is found in the secreted. Functionally, directly antagonizes activity of BMP2, BMP4, BMP6 and BMP7 in a dose-dependent manner. Enhances Wnt signaling and inhibits TGF-beta signaling. May be involved in the onset of endometrial receptivity for implantation/sensitization for the decidual cell reaction. This chain is Sclerostin domain-containing protein 1 (SOSTDC1), found in Pongo abelii (Sumatran orangutan).